The sequence spans 225 residues: Ribonuclease HII (225 aa).

Residues 35 to 225 (GLVAGVDEVG…SFRPCQISPD (191 aa)) enclose the RNase H type-2 domain. A divalent metal cation contacts are provided by aspartate 41, glutamate 42, and aspartate 137.

The protein belongs to the RNase HII family. Mn(2+) is required as a cofactor. Requires Mg(2+) as cofactor.

It is found in the cytoplasm. It carries out the reaction Endonucleolytic cleavage to 5'-phosphomonoester.. Its function is as follows. Endonuclease that specifically degrades the RNA of RNA-DNA hybrids. This chain is Ribonuclease HII, found in Nostoc sp. (strain PCC 7120 / SAG 25.82 / UTEX 2576).